Here is a 230-residue protein sequence, read N- to C-terminus: Ly6/PLAUR domain-containing protein 8 (230 aa).

An N-terminal signal peptide occupies residues 1–20 (MKSFLFAGIVVVLTVAAVDT). N-linked (GlcNAc...) asparagine glycans are attached at residues asparagine 37, asparagine 44, asparagine 74, asparagine 77, asparagine 90, asparagine 106, asparagine 110, asparagine 132, asparagine 137, asparagine 156, asparagine 168, asparagine 181, and asparagine 197. The 48-residue stretch at 125–172 (CPACYGNNETSCNETRKCYGERCVSIIAEFTNETKTLVLKGCSNVSIS) folds into the UPAR/Ly6 domain. The GPI-anchor amidated serine moiety is linked to residue serine 211. A propeptide spans 212–230 (QASFTPLALASILLLSLLL) (removed in mature form).

This sequence belongs to the CNF-like-inhibitor family. Highly N-glycosylated. Not O-glycosylated. Post-translationally, GPI-anchored. The GPI-anchor is cleaved, leading to secretion into the colonic lumen.

It localises to the cell membrane. The protein localises to the secreted. Its function is as follows. Secreted protein specifically required to prevent invasion of Gram-negative bacteria in the inner mucus layer of the colon epithelium, a portion of the large intestine which is free of commensal microbiota. Prevents invasion of flagellated microbiota by binding to the flagellum of bacteria, such as P.mirabilis, thereby inhibiting bacterial motility in the intestinal lumen. Segregation of intestinal bacteria and epithelial cells in the colon is required to preserve intestinal homeostasis. This Bos taurus (Bovine) protein is Ly6/PLAUR domain-containing protein 8 (LYPD8).